Consider the following 38-residue polypeptide: Photosystem II reaction center protein X (38 aa).

The helical transmembrane segment at 9 to 29 (IASLFAGAFIALAIGGVLVFI) threads the bilayer.

The protein belongs to the PsbX family. Type 1 subfamily. PSII is composed of 1 copy each of membrane proteins PsbA, PsbB, PsbC, PsbD, PsbE, PsbF, PsbH, PsbI, PsbJ, PsbK, PsbL, PsbM, PsbT, PsbX, PsbY, PsbZ, Psb30/Ycf12, at least 3 peripheral proteins of the oxygen-evolving complex and a large number of cofactors. It forms dimeric complexes.

It is found in the plastid. The protein resides in the chloroplast thylakoid membrane. In terms of biological role, involved in the binding and/or turnover of quinones at the Q(B) site of photosystem II (PSII). PSII is a light-driven water plastoquinone oxidoreductase, using light energy to abstract electrons from H(2)O, generating a proton gradient subsequently used for ATP formation. The polypeptide is Photosystem II reaction center protein X (Phaeodactylum tricornutum (strain CCAP 1055/1)).